The primary structure comprises 230 residues: Ribosomal RNA small subunit methyltransferase G (230 aa).

S-adenosyl-L-methionine-binding positions include glycine 95, phenylalanine 100, 146-147 (GE), and arginine 159.

It belongs to the methyltransferase superfamily. RNA methyltransferase RsmG family.

The protein localises to the cytoplasm. In terms of biological role, specifically methylates the N7 position of a guanine in 16S rRNA. The protein is Ribosomal RNA small subunit methyltransferase G of Parabacteroides distasonis (strain ATCC 8503 / DSM 20701 / CIP 104284 / JCM 5825 / NCTC 11152).